Consider the following 618-residue polypeptide: MQRRFLSSISATAGNTKTLNQGRWSVKQVKKSNFHVTLDEIRTSIDSSDFIALSLQNTGSYAAAWHRVSAIDTPQTSYLKAKYAAERYQILQFALCPFSLQGSKLTVHPYNFHLFPRDELKCGMPSYSFSCQASRLTAMAREGFDFNICIYEGISYLSRAQESASKFLSENPILADSVTVSSSPATVADTVFVGRIRSRVKNWRQSCIDSGSKTGDDDLVSSLRRLVLGSEQYGSRLCLTIDVCSERQVQLILEMLTEFSDDVVPLLVASKSRGTQAVRTVFMSSKEDKDLFKRELKDLEKEENRRVRGFREVVDFISSSQKPVVSQNYLSDFTSIHAKFLGPLPSNVDDFSSSLSSAFPNVVDLSQFMKEISPLSNISNLPAAMSSLNRFFAPVDVEVANQGCPVKLDEGHQSHGQNAVMISQLFAKLCTIQKSDLSTIQSNEDFQALASDEHANSVTSCSKNAGDENVKVWSKNSRRVSSENLVFIWGLGKKMTAAKLKNVLQKSHPVFAREFDVKYIDRSSAILVFWESGPSETFLSAVNNEEQLDGSLREMVAEGLRGAGYETYKRACRLGFWEADLAESLDKALESSDTDPDSDTKPSEIDWSNELAINFDEL.

Residues serine 54, glutamine 56, aspartate 332, and asparagine 418 each contribute to the a divalent metal cation site. Positions 588-607 (ALESSDTDPDSDTKPSEIDW) are disordered.

The protein belongs to the CAF1 family. It depends on a divalent metal cation as a cofactor.

It localises to the nucleus. The protein resides in the cytoplasm. It catalyses the reaction Exonucleolytic cleavage of poly(A) to 5'-AMP.. In terms of biological role, 3'-exoribonuclease that has a preference for poly(A) tails of mRNAs, thereby efficiently degrading poly(A) tails. Exonucleolytic degradation of the poly(A) tail is often the first step in the decay of eukaryotic mRNAs. This is Poly(A)-specific ribonuclease PARN-like from Arabidopsis thaliana (Mouse-ear cress).